The following is a 305-amino-acid chain: Sulfate adenylyltransferase subunit 2 (305 aa).

It belongs to the PAPS reductase family. CysD subfamily. In terms of assembly, heterodimer composed of CysD, the smaller subunit, and CysN.

It carries out the reaction sulfate + ATP + H(+) = adenosine 5'-phosphosulfate + diphosphate. The protein operates within sulfur metabolism; hydrogen sulfide biosynthesis; sulfite from sulfate: step 1/3. Its function is as follows. With CysN forms the ATP sulfurylase (ATPS) that catalyzes the adenylation of sulfate producing adenosine 5'-phosphosulfate (APS) and diphosphate, the first enzymatic step in sulfur assimilation pathway. APS synthesis involves the formation of a high-energy phosphoric-sulfuric acid anhydride bond driven by GTP hydrolysis by CysN coupled to ATP hydrolysis by CysD. The protein is Sulfate adenylyltransferase subunit 2 of Pseudomonas syringae pv. tomato (strain ATCC BAA-871 / DC3000).